We begin with the raw amino-acid sequence, 218 residues long: Large ribosomal subunit protein uL3 (218 aa).

An N5-methylglutamine modification is found at Gln153.

This sequence belongs to the universal ribosomal protein uL3 family. Part of the 50S ribosomal subunit. Forms a cluster with proteins L14 and L19. Methylated by PrmB.

Functionally, one of the primary rRNA binding proteins, it binds directly near the 3'-end of the 23S rRNA, where it nucleates assembly of the 50S subunit. The polypeptide is Large ribosomal subunit protein uL3 (Alkalilimnicola ehrlichii (strain ATCC BAA-1101 / DSM 17681 / MLHE-1)).